The chain runs to 1108 residues: Retinal guanylyl cyclase 1 (1108 aa).

An N-terminal signal peptide occupies residues 1–54; sequence MSAWLLPAGGLPGAGFCVPARQSPSSFSRVLRWPRPGLPGLLLLLLLPSPSALS. Residues 55-465 are Extracellular-facing; that stretch reads AVFKVGVLGP…PDVICNGGVE (411 aa). C108 and C136 are oxidised to a cystine. A glycan (N-linked (GlcNAc...) asparagine) is linked at N300. A helical membrane pass occupies residues 466–490; the sequence is PGLVFVGFLLVIGMGLTGAFLAHYL. One can recognise a Protein kinase domain in the interval 491–811; the sequence is RHRLLHMQMA…DLTFDLFKSI (321 aa). Residues 491–1108 are Cytoplasmic-facing; sequence RHRLLHMQMA…KARPGQFTGK (618 aa). One can recognise a Guanylate cyclase domain in the interval 883–1013; the sequence is TLYFSDIVGF…DTVNTASRME (131 aa). The interval 1069–1108 is disordered; sequence IPKPPDLQPGASNHGISLQEIPPERRKKLEKARPGQFTGK.

Belongs to the adenylyl cyclase class-4/guanylyl cyclase family. In terms of assembly, homodimer; requires homodimerization for guanylyl cyclase activity. Interacts (via C-terminus) with RD3 (via C-terminus); promotes the exit of GUCY2E from the endoplasmic reticulum and its trafficking to the photoreceptor outer segments. Interaction with RD3 negatively regulates GUCY2E guanylate cyclase activity. There are 9 conserved cysteine residues in sensory guanylate cyclases, 6 in the extracellular domain, which may be involved in intra- or interchain disulfide bonds.

Its subcellular location is the photoreceptor outer segment membrane. The protein resides in the endoplasmic reticulum membrane. The enzyme catalyses GTP = 3',5'-cyclic GMP + diphosphate. Activated by GUCA1A when free calcium ions concentration is low, and inhibited by GUCA1A when free calcium ions concentration is high. Negatively regulated by RD3; RD3 inhibits the basal and GUCA1A-stimulated guanylate cyclase activity. Catalyzes the synthesis of cyclic GMP (cGMP) in rods and cones of photoreceptors. Plays an essential role in phototransduction, by mediating cGMP replenishment. May also participate in the trafficking of membrane-asociated proteins to the photoreceptor outer segment membrane. This Mus musculus (Mouse) protein is Retinal guanylyl cyclase 1 (Gucy2e).